Reading from the N-terminus, the 2208-residue chain is RNA-directed RNA polymerase L (2208 aa).

The interval 26–284 is endonuclease; it reads KDALLSQVHP…LHQDSDTINC (259 aa). Mn(2+)-binding residues include Glu-51, Asp-89, and Glu-102. The active site involves Lys-115. The RdRp catalytic domain maps to 1171–1367; that stretch reads CDMKMAVNNG…YLSSKLNKFV (197 aa). Asp-1329 lines the Mg(2+) pocket.

The protein belongs to the Bunyavirales RNA polymerase family. In terms of assembly, homomultimer; the oligomeric structure is essential for the polymerase activity. Interacts with nucleoprotein N. Interacts with protein Z; this interaction inhibits viral transcription and replication, Z partially blocks the product exit tunnel for the releasing nascent RNA product. It depends on Mn(2+) as a cofactor. Requires Mg(2+) as cofactor.

The protein resides in the virion. The protein localises to the host cytoplasm. It carries out the reaction RNA(n) + a ribonucleoside 5'-triphosphate = RNA(n+1) + diphosphate. In terms of biological role, RNA-dependent RNA polymerase, which is responsible for the replication and transcription of the viral RNA genome using antigenomic RNA as an intermediate. During transcription, synthesizes subgenomic RNAs and assures their capping by a cap-snatching mechanism, which involves the endonuclease activity cleaving the host capped pre-mRNAs. These short capped RNAs are then used as primers for viral transcription. The 3'-end of subgenomic mRNAs molecules are heterogeneous and not polyadenylated. The replicase function is to direct synthesis of antigenomic and genomic RNA which are encapsidated and non capped. As a consequence of the use of the same enzyme for both transcription and replication, these mechanisms need to be well coordinated. These processes may be regulated by proteins N and Z in a dose-dependent manner. Z protein inhibits the viral polymerase L und thus the viral transcription and RNA synthesis. This is RNA-directed RNA polymerase L from Homo sapiens (Human).